The sequence spans 422 residues: Cytochrome P-450 monooxygenase DoxA (422 aa).

C369 contacts heme.

This sequence belongs to the cytochrome P450 family. In terms of assembly, monomer. The cofactor is heme.

It localises to the cytoplasm. It catalyses the reaction 13-deoxydaunorubicin + NADPH + O2 + H(+) = 13-dihydrodaunorubicin + NADP(+) + H2O. The catalysed reaction is 13-dihydrodaunorubicin + NADPH + O2 + H(+) = daunorubicin + NADP(+) + 2 H2O. It carries out the reaction 13-deoxycarminomycin + NADPH + O2 + H(+) = 13-dihydrocarminomycin + NADP(+) + H2O. The enzyme catalyses 13-dihydrocarminomycin + NADPH + O2 + H(+) = carminomycin + NADP(+) + 2 H2O. It participates in antibiotic biosynthesis; daunorubicin biosynthesis. Its pathway is antibiotic biosynthesis; carminomycin biosynthesis. Its activity is regulated as follows. Strongly inhibited by dithiothreitol and high ionic strength buffers. In terms of biological role, involved in the biosynthesis of the anthracyclines carminomycin and daunorubicin (daunomycin) which are aromatic polyketide antibiotics that exhibit high cytotoxicity and are widely applied in the chemotherapy of a variety of cancers. In vivo, DoxA catalyzes the C-13 hydroxylation of 13-deoxycarminomycin and 13-deoxydaunorubicin to yield 13-dihydrocarminomycin and 13-dihydrodaunorubicin, respectively, as well as the oxidation of these 13-dihydro-anthracyclines to their respective 13-keto forms, carminomycin and daunorubicin. In vitro, it also catalyzes the C-14 hydroxylation of daunorubicin to form doxorubicin (adriamycin), although this strain is not a doxorubicin producer. It is not able to accept anthracyclinones (aglycones) and anthracyclines with a 10-carbomethoxyl moiety. 13-oxidation of the anthracyclines possessing the 4-methoxy substitution is greatly favored. The anthracycline analog desacetyladriamycin can be oxidized to 10-hydroxydesacetyladriamycin. It can only use NADP. DoxA acts jointly with DauV. The polypeptide is Cytochrome P-450 monooxygenase DoxA (doxA) (Streptomyces sp. (strain C5)).